A 1438-amino-acid chain; its full sequence is DNA polymerase III PolC-type (1438 aa).

An Exonuclease domain is found at 422–578 (YVVFDVETTG…YDTEATAYMF (157 aa)).

The protein belongs to the DNA polymerase type-C family. PolC subfamily.

The protein localises to the cytoplasm. The catalysed reaction is DNA(n) + a 2'-deoxyribonucleoside 5'-triphosphate = DNA(n+1) + diphosphate. Required for replicative DNA synthesis. This DNA polymerase also exhibits 3' to 5' exonuclease activity. The sequence is that of DNA polymerase III PolC-type from Staphylococcus saprophyticus subsp. saprophyticus (strain ATCC 15305 / DSM 20229 / NCIMB 8711 / NCTC 7292 / S-41).